Reading from the N-terminus, the 310-residue chain is MMAAEATAALIDRLPKVRGELVADAPLAPLTWFRAGGNAEVLFRPADADDLAAFLAGTPADVPVTIIGVGSNLLVREGGVPGVVIRLGRGFMNIEIEGTCVRAGTAALDVAVSRAAQEAGLAGLEFYRGIPGSIGGALRMNGGAYGRETKDVLVEAVAIDRAGKRHVLTNADMHYTYRHCGAPDDLIFVEALFQGTPGNAEDILRRMNEITSSREATQPIRTRTGGSTFKNPEGHKSWQLIDAAGCRGLRKGGAQVSELHCNFLINTGDATASDIEDLGEEVRARVKETSGVTLEWEIRRIGIRKERGGA.

The FAD-binding PCMH-type domain maps to 34–213 (RAGGNAEVLF…LRRMNEITSS (180 aa)). The active site involves arginine 178. Serine 227 serves as the catalytic Proton donor. The active site involves glutamate 297.

The protein belongs to the MurB family. It depends on FAD as a cofactor.

It is found in the cytoplasm. It carries out the reaction UDP-N-acetyl-alpha-D-muramate + NADP(+) = UDP-N-acetyl-3-O-(1-carboxyvinyl)-alpha-D-glucosamine + NADPH + H(+). Its pathway is cell wall biogenesis; peptidoglycan biosynthesis. In terms of biological role, cell wall formation. The sequence is that of UDP-N-acetylenolpyruvoylglucosamine reductase from Parvibaculum lavamentivorans (strain DS-1 / DSM 13023 / NCIMB 13966).